A 568-amino-acid polypeptide reads, in one-letter code: Matrix metalloproteinase-21 (568 aa).

Residues 1–24 (MLAASVLRLTLPLCWLVAPQPTQP) form the signal peptide. The propeptide occupies 25–143 (ERLFHSRDRS…SLGLRPRARQ (119 aa)). The short motif at 110–117 (PRCGVPDT) is the Cysteine switch element. Zn(2+) is bound by residues Cys-112 and His-282. The active site involves Glu-283. Residues His-286 and His-292 each coordinate Zn(2+). Cys-328 and Cys-559 are oxidised to a cystine. Hemopexin repeat units follow at residues 329–388 (KGSF…WRGI), 390–446 (TQSI…FPGI), 447–495 (PSPL…FPAI), and 502–558 (FRNL…WFDV). An N-linked (GlcNAc...) asparagine glycan is attached at Asn-371.

Belongs to the peptidase M10A family. Zn(2+) is required as a cofactor. It depends on Ca(2+) as a cofactor. Post-translationally, the precursor is cleaved by a furin endopeptidase.

The protein resides in the secreted. Its function is as follows. Plays a specialized role in the generation of left-right asymmetry during embryogenesis. May act as a negative regulator of the NOTCH-signaling pathway. Cleaves alpha-1-antitrypsin. This is Matrix metalloproteinase-21 (Mmp21) from Mus musculus (Mouse).